The chain runs to 498 residues: ATP synthase subunit beta, chloroplastic (498 aa).

Residue 172–179 (GGAGVGKT) coordinates ATP.

The protein belongs to the ATPase alpha/beta chains family. F-type ATPases have 2 components, CF(1) - the catalytic core - and CF(0) - the membrane proton channel. CF(1) has five subunits: alpha(3), beta(3), gamma(1), delta(1), epsilon(1). CF(0) has four main subunits: a(1), b(1), b'(1) and c(9-12).

Its subcellular location is the plastid. The protein localises to the chloroplast thylakoid membrane. The enzyme catalyses ATP + H2O + 4 H(+)(in) = ADP + phosphate + 5 H(+)(out). Functionally, produces ATP from ADP in the presence of a proton gradient across the membrane. The catalytic sites are hosted primarily by the beta subunits. The polypeptide is ATP synthase subunit beta, chloroplastic (Populus tremuloides (Quaking aspen)).